The following is a 1058-amino-acid chain: Ubiquitin-like modifier-activating enzyme 1 (1058 aa).

The disordered stretch occupies residues 1–47; it reads MSSSPLSKKRRVSGPDPKPGSNCSPAQSVLSEVPSVPTNGMAKNGSE. S2 bears the N-acetylserine mark. At S2 the chain carries N-acetylalanine. S4 is subject to Phosphoserine. Residues 5–11 carry the Nuclear localization signal motif; that stretch reads PLSKKRR. 4 positions are modified to phosphoserine: S13, S21, S24, and S46. Over residues 21-30 the composition is skewed to polar residues; the sequence is SNCSPAQSVL. At Y55 the chain carries Phosphotyrosine. Repeat copies occupy residues 63–199 and 459–611. The 2 approximate repeats stretch occupies residues 63-611; sequence GHEAMKRLQT…GTKGNVQVVI (549 aa). ATP-binding positions include A478, D504, R515, K528, and 576–577; that span reads DN. An N6-succinyllysine modification is found at K528. C632 serves as the catalytic Glycyl thioester intermediate. K671 carries the N6-acetyllysine modification. Residue T800 is modified to Phosphothreonine. 4 positions are modified to phosphoserine: S810, S816, S820, and S835. K980 carries the N6-acetyllysine modification.

Belongs to the ubiquitin-activating E1 family. In terms of assembly, monomer. Interacts with GAN (via BTB domain). ISGylated. As to expression, detected in erythrocytes (at protein level). Ubiquitous.

The protein localises to the cytoplasm. The protein resides in the mitochondrion. It localises to the nucleus. It carries out the reaction ATP + ubiquitin + [E1 ubiquitin-activating enzyme]-L-cysteine = AMP + diphosphate + S-ubiquitinyl-[E1 ubiquitin-activating enzyme]-L-cysteine.. The protein operates within protein modification; protein ubiquitination. In terms of biological role, catalyzes the first step in ubiquitin conjugation to mark cellular proteins for degradation through the ubiquitin-proteasome system. Activates ubiquitin by first adenylating its C-terminal glycine residue with ATP, and thereafter linking this residue to the side chain of a cysteine residue in E1, yielding a ubiquitin-E1 thioester and free AMP. Essential for the formation of radiation-induced foci, timely DNA repair and for response to replication stress. Promotes the recruitment of TP53BP1 and BRCA1 at DNA damage sites. This is Ubiquitin-like modifier-activating enzyme 1 (UBA1) from Homo sapiens (Human).